The following is a 1023-amino-acid chain: 2-oxoglutarate dehydrogenase complex component E1 (1023 aa).

The transit peptide at 1–40 (MFHLRTCAAKLRPLTASQTVKTFSQNRPAAARTFQQIRCY) directs the protein to the mitochondrion. K74 is subject to N6-succinyllysine. A Phosphoserine modification is found at S100. Ca(2+) contacts are provided by H143, D156, and D158. Residue R312 coordinates thiamine diphosphate. K401 carries the post-translational modification N6-acetyllysine. 3 residues coordinate thiamine diphosphate: D411, N444, and I446. Residues D411, N444, and I446 each coordinate Mg(2+). K534 participates in a covalent cross-link: Glycyl lysine isopeptide (Lys-Gly) (interchain with G-Cter in ubiquitin). At K564 the chain carries N6-succinyllysine. Thiamine diphosphate is bound at residue Q676. K970 carries the post-translational modification N6-acetyllysine.

The protein belongs to the alpha-ketoglutarate dehydrogenase family. Homodimer. The 2-oxoglutarate dehydrogenase complex is composed of OGDH (2-oxoglutarate dehydrogenase; E1), DLST (dihydrolipoamide succinyltransferase; E2), DLD (dihydrolipoamide dehydrogenase; E3) and the assembly factor KGD4. It contains multiple copies of the three enzymatic components (E1, E2 and E3). In the nucleus, the 2-oxoglutarate dehydrogenase complex associates with KAT2A. Interacts with ABHD11; this interaction maintains the functional lipoylation of the 2-oxoglutarate dehydrogenase complex. It depends on thiamine diphosphate as a cofactor. Mg(2+) is required as a cofactor.

The protein resides in the mitochondrion. Its subcellular location is the nucleus. The enzyme catalyses N(6)-[(R)-lipoyl]-L-lysyl-[protein] + 2-oxoglutarate + H(+) = N(6)-[(R)-S(8)-succinyldihydrolipoyl]-L-lysyl-[protein] + CO2. Its activity is regulated as follows. Calcium ions and ADP stimulate, whereas ATP and NADH reduce catalytic activity. Its function is as follows. 2-oxoglutarate dehydrogenase (E1o) component of the 2-oxoglutarate dehydrogenase complex (OGDHC). Participates in the first step, rate limiting for the overall conversion of 2-oxoglutarate to succinyl-CoA and CO(2) catalyzed by the whole OGDHC. Catalyzes the irreversible decarboxylation of 2-oxoglutarate (alpha-ketoglutarate) via the thiamine diphosphate (ThDP) cofactor and subsequent transfer of the decarboxylated acyl intermediate on an oxidized dihydrolipoyl group that is covalently amidated to the E2 enzyme (dihydrolipoyllysine-residue succinyltransferase or DLST). Plays a key role in the Krebs (citric acid) cycle, which is a common pathway for oxidation of fuel molecules, including carbohydrates, fatty acids, and amino acids. Can catalyze the decarboxylation of 2-oxoadipate in vitro, but at a much lower rate than 2-oxoglutarate. Mainly active in the mitochondrion. A fraction of the 2-oxoglutarate dehydrogenase complex also localizes in the nucleus and is required for lysine succinylation of histones: associates with KAT2A on chromatin and provides succinyl-CoA to histone succinyltransferase KAT2A. The protein is 2-oxoglutarate dehydrogenase complex component E1 of Pongo abelii (Sumatran orangutan).